A 452-amino-acid chain; its full sequence is MSHAAAAKPATARKSQALSGTARVPGDKSISHRSFMFGGLASGETRITGLLEGEDVMRTGAAMKAMGAHIEKRGAEWVIRGTGNGALLQPEGPLDFGNAGTGSRLTMGLVGTYDMETTFIGDASLSGRPMGRVLEPLRQMGVQVLKATPGDRMPITLHGPKHAAPITYRVPMASAQVKSAVLLAGLNTPGITTVIEPVMTRDHTEKMLKGFGANLSVETDERGVRHIFIEGQGRLTGQTIAVPGDPSSAGFPLVAALIVPGSDITIENVLMNPTRTGLLLTLQEMGGQIDILNPRNAGGEDVADLRVRYSELKGVAVPPERAPSMIDEYPVLAVAASFAEGETLMQGLEELRVKESDRLSAVANGLKLNGVDCTEGEASLAVRGRPGGKGLGGHPNGLDTTVQTHLDHRIAMSFLVMGLATEKPVTIDDQAMIATSFPEFMGLMTGLGAEIR.

Residues Met1–Ala17 show a composition bias toward low complexity. Residues Met1 to Gly26 are disordered. 3-phosphoshikimate contacts are provided by Lys28, Ser29, and Arg33. Lys28 lines the phosphoenolpyruvate pocket. Phosphoenolpyruvate is bound by residues Gly100 and Arg128. The 3-phosphoshikimate site is built by Ser174, Gln176, Asp327, and Lys354. Gln176 contributes to the phosphoenolpyruvate binding site. Asp327 functions as the Proton acceptor in the catalytic mechanism. Positions 358 and 409 each coordinate phosphoenolpyruvate.

The protein belongs to the EPSP synthase family. Monomer.

Its subcellular location is the cytoplasm. The enzyme catalyses 3-phosphoshikimate + phosphoenolpyruvate = 5-O-(1-carboxyvinyl)-3-phosphoshikimate + phosphate. The protein operates within metabolic intermediate biosynthesis; chorismate biosynthesis; chorismate from D-erythrose 4-phosphate and phosphoenolpyruvate: step 6/7. Functionally, catalyzes the transfer of the enolpyruvyl moiety of phosphoenolpyruvate (PEP) to the 5-hydroxyl of shikimate-3-phosphate (S3P) to produce enolpyruvyl shikimate-3-phosphate and inorganic phosphate. The sequence is that of 3-phosphoshikimate 1-carboxyvinyltransferase from Mesorhizobium japonicum (strain LMG 29417 / CECT 9101 / MAFF 303099) (Mesorhizobium loti (strain MAFF 303099)).